The following is a 70-amino-acid chain: MPRKIEEIKDFLLTARRKDAKSVKIKKNKDNVKFKVRCSRYLYTLVITDKEKAEKLKQSLPPGLAVKDLK.

Lysine 4 is covalently cross-linked (Glycyl lysine isopeptide (Lys-Gly) (interchain with G-Cter in SUMO2)). The residue at position 9 (lysine 9) is an N6-acetyllysine; alternate. Lysine 9 is covalently cross-linked (Glycyl lysine isopeptide (Lys-Gly) (interchain with G-Cter in SUMO2); alternate). Residue lysine 67 is modified to N6-acetyllysine.

This sequence belongs to the eukaryotic ribosomal protein eL38 family. As to quaternary structure, component of the large ribosomal subunit.

The protein localises to the cytoplasm. Component of the large ribosomal subunit. The ribosome is a large ribonucleoprotein complex responsible for the synthesis of proteins in the cell. This is Large ribosomal subunit protein eL38 (Rpl38) from Mus musculus (Mouse).